The following is a 512-amino-acid chain: Glutathione-binding protein GsiB (512 aa).

The N-terminal stretch at 1–26 (MARAVHRSGLVALGIVTALMASCAFA) is a signal peptide.

Belongs to the bacterial solute-binding protein 5 family. The complex is composed of two ATP-binding proteins (GsiA), two transmembrane proteins (GsiC and GsiD) and a solute-binding protein (GsiB).

The protein resides in the periplasm. Its function is as follows. Part of the ABC transporter complex GsiABCD involved in glutathione import. Binds glutathione. The polypeptide is Glutathione-binding protein GsiB (Shigella dysenteriae serotype 1 (strain Sd197)).